The primary structure comprises 164 residues: Peptidyl-prolyl cis-trans isomerase (164 aa).

Positions 7–163 (FFDLQANGEN…KKITIADCGQ (157 aa)) constitute a PPIase cyclophilin-type domain.

Belongs to the cyclophilin-type PPIase family. PPIase A subfamily.

The protein resides in the cytoplasm. It carries out the reaction [protein]-peptidylproline (omega=180) = [protein]-peptidylproline (omega=0). Binds cyclosporin A (CsA). CsA mediates some of its effects via an inhibitory action on PPIase. In terms of biological role, PPIases accelerate the folding of proteins. It catalyzes the cis-trans isomerization of proline imidic peptide bonds in oligopeptides. The protein is Peptidyl-prolyl cis-trans isomerase of Hemicentrotus pulcherrimus (Sea urchin).